Here is a 302-residue protein sequence, read N- to C-terminus: tRNA pseudouridine synthase B (302 aa).

Aspartate 48 serves as the catalytic Nucleophile.

The protein belongs to the pseudouridine synthase TruB family. Type 1 subfamily.

It carries out the reaction uridine(55) in tRNA = pseudouridine(55) in tRNA. Functionally, responsible for synthesis of pseudouridine from uracil-55 in the psi GC loop of transfer RNAs. This Xylella fastidiosa (strain Temecula1 / ATCC 700964) protein is tRNA pseudouridine synthase B.